The primary structure comprises 477 residues: Aspartyl/glutamyl-tRNA(Asn/Gln) amidotransferase subunit B (477 aa).

The protein belongs to the GatB/GatE family. GatB subfamily. As to quaternary structure, heterotrimer of A, B and C subunits.

The enzyme catalyses L-glutamyl-tRNA(Gln) + L-glutamine + ATP + H2O = L-glutaminyl-tRNA(Gln) + L-glutamate + ADP + phosphate + H(+). It carries out the reaction L-aspartyl-tRNA(Asn) + L-glutamine + ATP + H2O = L-asparaginyl-tRNA(Asn) + L-glutamate + ADP + phosphate + 2 H(+). Allows the formation of correctly charged Asn-tRNA(Asn) or Gln-tRNA(Gln) through the transamidation of misacylated Asp-tRNA(Asn) or Glu-tRNA(Gln) in organisms which lack either or both of asparaginyl-tRNA or glutaminyl-tRNA synthetases. The reaction takes place in the presence of glutamine and ATP through an activated phospho-Asp-tRNA(Asn) or phospho-Glu-tRNA(Gln). The polypeptide is Aspartyl/glutamyl-tRNA(Asn/Gln) amidotransferase subunit B (Methylobacillus flagellatus (strain ATCC 51484 / DSM 6875 / VKM B-1610 / KT)).